The sequence spans 1036 residues: Phytosulfokine receptor 2 (1036 aa).

The N-terminal stretch at 1–16 is a signal peptide; sequence MVIILLLVFFVGSSVS. N-linked (GlcNAc...) asparagine glycans are attached at residues Asn36 and Asn45. LRR repeat units lie at residues 89 to 111, 113 to 136, 137 to 159, 160 to 182, 185 to 207, 209 to 231, 233 to 256, 257 to 279, 281 to 303, 305 to 326, 329 to 351, 353 to 375, 377 to 398, 403 to 423, 427 to 450, 451 to 473, and 475 to 498; these read ELRV…ISKL, QLQV…SGLK, LIQS…GVFP, GLVM…LCSS, GIQV…YNCS, SIQQ…LYSI, ELEQ…SNLS, GLKS…FGNL, QLEH…LSQC, KLRV…NFTG, DLCV…LGHC, KMKI…FKNL, SLLF…MNVL, NLST…NNVT, NLAI…LNCK, KLEV…IGKM, and SLFY…TELK. N-linked (GlcNAc...) asparagine glycosylation is found at Asn142, Asn165, and Asn205. N-linked (GlcNAc...) asparagine glycosylation is found at Asn251, Asn254, and Asn278. Asn313 and Asn323 each carry an N-linked (GlcNAc...) asparagine glycan. 3 N-linked (GlcNAc...) asparagine glycosylation sites follow: Asn385, Asn403, and Asn421. N-linked (GlcNAc...) asparagine glycans are attached at residues Asn483, Asn504, Asn523, Asn549, and Asn571. LRR repeat units lie at residues 561–583 and 585–606; these read ELHM…ISGL and NLEV…SFQS. The chain crosses the membrane as a helical span at residues 680-700; the sequence is IVVLTISLAIGITLLLSVILL. Phosphothreonine is present on Thr751. The 272-residue stretch at 754 to 1025 folds into the Protein kinase domain; it reads FSQANIIGCG…PLIEEVVTWL (272 aa). Residues 760-768 and Lys782 each bind ATP; that span reads IGCGGFGLV. Phosphotyrosine is present on residues Tyr827 and Tyr867. The Proton acceptor role is filled by Asp880. Tyr922 is subject to Phosphotyrosine. The stretch at 995 to 1020 is one LRR 20 repeat; the sequence is RTVLEMLEIACKCIDHEPRRRPLIEE.

This sequence belongs to the protein kinase superfamily. Ser/Thr protein kinase family.

The protein resides in the cell membrane. It catalyses the reaction L-seryl-[protein] + ATP = O-phospho-L-seryl-[protein] + ADP + H(+). The catalysed reaction is L-threonyl-[protein] + ATP = O-phospho-L-threonyl-[protein] + ADP + H(+). In terms of biological role, phytosulfokine receptor with a serine/threonine-protein kinase activity. This Arabidopsis thaliana (Mouse-ear cress) protein is Phytosulfokine receptor 2 (PSKR2).